The following is an 816-amino-acid chain: Leucine--tRNA ligase (816 aa).

A 'HIGH' region motif is present at residues 40–51 (SYPSGAQLHAGH). Residues 576-580 (KMSKS) carry the 'KMSKS' region motif. An ATP-binding site is contributed by lysine 579.

This sequence belongs to the class-I aminoacyl-tRNA synthetase family.

Its subcellular location is the cytoplasm. The catalysed reaction is tRNA(Leu) + L-leucine + ATP = L-leucyl-tRNA(Leu) + AMP + diphosphate. The protein is Leucine--tRNA ligase of Clostridium beijerinckii (strain ATCC 51743 / NCIMB 8052) (Clostridium acetobutylicum).